The chain runs to 333 residues: Probable cytosolic iron-sulfur protein assembly protein 1 (333 aa).

WD repeat units lie at residues 12–50 (LHDD…IIEE), 55–94 (AHKK…YNDE), 107–146 (GHEN…EEFE), 153–192 (EHSQ…WECC), 197–238 (GHEG…GEYE), 250–288 (AHTR…WIVE), and 298–333 (YETN…FDEN).

Belongs to the WD repeat CIA1 family. As to quaternary structure, interacts with NAR1.

Its subcellular location is the cytoplasm. The protein resides in the nucleus. Functionally, essential component of the cytosolic iron-sulfur (Fe/S) protein assembly machinery. Required for the maturation of extramitochondrial Fe/S proteins. This chain is Probable cytosolic iron-sulfur protein assembly protein 1, found in Kluyveromyces lactis (strain ATCC 8585 / CBS 2359 / DSM 70799 / NBRC 1267 / NRRL Y-1140 / WM37) (Yeast).